A 379-amino-acid chain; its full sequence is UDP-N-acetylglucosamine--N-acetylmuramyl-(pentapeptide) pyrophosphoryl-undecaprenol N-acetylglucosamine transferase (379 aa).

UDP-N-acetyl-alpha-D-glucosamine is bound by residues 17–19 (TGG), N128, R169, S197, and Q298.

Belongs to the glycosyltransferase 28 family. MurG subfamily.

The protein resides in the cell inner membrane. It carries out the reaction di-trans,octa-cis-undecaprenyl diphospho-N-acetyl-alpha-D-muramoyl-L-alanyl-D-glutamyl-meso-2,6-diaminopimeloyl-D-alanyl-D-alanine + UDP-N-acetyl-alpha-D-glucosamine = di-trans,octa-cis-undecaprenyl diphospho-[N-acetyl-alpha-D-glucosaminyl-(1-&gt;4)]-N-acetyl-alpha-D-muramoyl-L-alanyl-D-glutamyl-meso-2,6-diaminopimeloyl-D-alanyl-D-alanine + UDP + H(+). The protein operates within cell wall biogenesis; peptidoglycan biosynthesis. Its function is as follows. Cell wall formation. Catalyzes the transfer of a GlcNAc subunit on undecaprenyl-pyrophosphoryl-MurNAc-pentapeptide (lipid intermediate I) to form undecaprenyl-pyrophosphoryl-MurNAc-(pentapeptide)GlcNAc (lipid intermediate II). The sequence is that of UDP-N-acetylglucosamine--N-acetylmuramyl-(pentapeptide) pyrophosphoryl-undecaprenol N-acetylglucosamine transferase from Brucella suis biovar 1 (strain 1330).